We begin with the raw amino-acid sequence, 322 residues long: Undecaprenyl-phosphate 4-deoxy-4-formamido-L-arabinose transferase (322 aa).

The Cytoplasmic portion of the chain corresponds to 1–235 (MFEIHPVKKV…TCLTTTPLRM (235 aa)). Residues 236–256 (LSLLGSIIAIGGFSIAVLLVI) form a helical membrane-spanning segment. The Periplasmic segment spans residues 257-269 (LRLTFGPQWAAEG). The helical transmembrane segment at 270–290 (VFMLFAVLFTFIGAQFIGMGL) threads the bilayer. The Cytoplasmic segment spans residues 291–322 (LGEYIGRIYTDVRARPRYFVQQVIRPSSKENE).

It belongs to the glycosyltransferase 2 family.

It localises to the cell inner membrane. It catalyses the reaction UDP-4-deoxy-4-formamido-beta-L-arabinose + di-trans,octa-cis-undecaprenyl phosphate = 4-deoxy-4-formamido-alpha-L-arabinopyranosyl di-trans,octa-cis-undecaprenyl phosphate + UDP. It functions in the pathway glycolipid biosynthesis; 4-amino-4-deoxy-alpha-L-arabinose undecaprenyl phosphate biosynthesis; 4-amino-4-deoxy-alpha-L-arabinose undecaprenyl phosphate from UDP-4-deoxy-4-formamido-beta-L-arabinose and undecaprenyl phosphate: step 1/2. The protein operates within bacterial outer membrane biogenesis; lipopolysaccharide biosynthesis. In terms of biological role, catalyzes the transfer of 4-deoxy-4-formamido-L-arabinose from UDP to undecaprenyl phosphate. The modified arabinose is attached to lipid A and is required for resistance to polymyxin and cationic antimicrobial peptides. This is Undecaprenyl-phosphate 4-deoxy-4-formamido-L-arabinose transferase from Escherichia coli O7:K1 (strain IAI39 / ExPEC).